Reading from the N-terminus, the 244-residue chain is ATP synthase subunit a (244 aa).

Helical transmembrane passes span 20–40 (FFDISITTITVYLGLLMVIVI), 81–101 (GILFFPFIMSLFLFVLTLNVM), 113–133 (QLLVTFTLAITIMIGITIWGF), 140–160 (FLNIFVPSGIEPWLLPLLVFI), 176–196 (LFANMLAGHLLIHIIGVAAIY), 202–222 (FIGILPWICVIAFMFLELGIA), and 223–243 (FLQAYVFVLLTLIYIANIINL).

The protein belongs to the ATPase A chain family. F-type ATPases have 2 components, CF(1) - the catalytic core - and CF(0) - the membrane proton channel. CF(1) has five subunits: alpha(3), beta(3), gamma(1), delta(1), epsilon(1). CF(0) has three main subunits: a, b and c.

The protein localises to the mitochondrion inner membrane. Its function is as follows. Mitochondrial membrane ATP synthase (F(1)F(0) ATP synthase or Complex V) produces ATP from ADP in the presence of a proton gradient across the membrane which is generated by electron transport complexes of the respiratory chain. F-type ATPases consist of two structural domains, F(1) - containing the extramembraneous catalytic core and F(0) - containing the membrane proton channel, linked together by a central stalk and a peripheral stalk. During catalysis, ATP synthesis in the catalytic domain of F(1) is coupled via a rotary mechanism of the central stalk subunits to proton translocation. Key component of the proton channel; it may play a direct role in the translocation of protons across the membrane. The polypeptide is ATP synthase subunit a (atp6) (Dictyostelium discoideum (Social amoeba)).